Here is a 213-residue protein sequence, read N- to C-terminus: MVPFFDKTQTVDQANALPGRTTPMPVATLNVVTDHSMTQVPDGLEVAIFAMGCFWGVERLFWQQQGVYSTAAGYSGGYTPNPTYREVCSGQTGHTEVVRVVFDPKIISYKQLLQVFWENHDPAQGMRQGGDVGTQYRSAIYTLTPEQQTEAESSLQRFQQAMEQAGDKRAITTEVAPALPFYYAEDDHQQYLYKNPEGYCGLGGIGVCLPPQG.

C53 is an active-site residue.

Belongs to the MsrA Met sulfoxide reductase family.

The catalysed reaction is L-methionyl-[protein] + [thioredoxin]-disulfide + H2O = L-methionyl-(S)-S-oxide-[protein] + [thioredoxin]-dithiol. It carries out the reaction [thioredoxin]-disulfide + L-methionine + H2O = L-methionine (S)-S-oxide + [thioredoxin]-dithiol. Its function is as follows. Has an important function as a repair enzyme for proteins that have been inactivated by oxidation. Catalyzes the reversible oxidation-reduction of methionine sulfoxide in proteins to methionine. The protein is Peptide methionine sulfoxide reductase MsrA of Serratia proteamaculans (strain 568).